The following is a 248-amino-acid chain: 3-deoxy-manno-octulosonate cytidylyltransferase (248 aa).

The protein belongs to the KdsB family. The cofactor is Mg(2+).

The protein resides in the cytoplasm. It carries out the reaction 3-deoxy-alpha-D-manno-oct-2-ulosonate + CTP = CMP-3-deoxy-beta-D-manno-octulosonate + diphosphate. It functions in the pathway nucleotide-sugar biosynthesis; CMP-3-deoxy-D-manno-octulosonate biosynthesis; CMP-3-deoxy-D-manno-octulosonate from 3-deoxy-D-manno-octulosonate and CTP: step 1/1. It participates in bacterial outer membrane biogenesis; lipopolysaccharide biosynthesis. In terms of biological role, activates KDO (a required 8-carbon sugar) for incorporation into bacterial lipopolysaccharide in Gram-negative bacteria. This chain is 3-deoxy-manno-octulosonate cytidylyltransferase, found in Escherichia coli O157:H7.